Consider the following 359-residue polypeptide: DNA replication and repair protein RecF (359 aa).

Position 30-37 (30-37 (GPNGSGKT)) interacts with ATP.

Belongs to the RecF family.

The protein localises to the cytoplasm. In terms of biological role, the RecF protein is involved in DNA metabolism; it is required for DNA replication and normal SOS inducibility. RecF binds preferentially to single-stranded, linear DNA. It also seems to bind ATP. This is DNA replication and repair protein RecF from Vibrio vulnificus (strain YJ016).